We begin with the raw amino-acid sequence, 118 residues long: Small ribosomal subunit protein uS13 (118 aa).

Positions 94-118 are disordered; the sequence is GLPLRGQRTRTNARTRKGPRRPIRK.

It belongs to the universal ribosomal protein uS13 family. In terms of assembly, part of the 30S ribosomal subunit. Forms a loose heterodimer with protein S19. Forms two bridges to the 50S subunit in the 70S ribosome.

Its function is as follows. Located at the top of the head of the 30S subunit, it contacts several helices of the 16S rRNA. In the 70S ribosome it contacts the 23S rRNA (bridge B1a) and protein L5 of the 50S subunit (bridge B1b), connecting the 2 subunits; these bridges are implicated in subunit movement. Contacts the tRNAs in the A and P-sites. The sequence is that of Small ribosomal subunit protein uS13 from Thioalkalivibrio sulfidiphilus (strain HL-EbGR7).